The following is a 341-amino-acid chain: Vacuolar morphogenesis protein 7 homolog (341 aa).

One can recognise a PX domain in the interval 1-115 (MALKIKIPET…KFLNIKDESE (115 aa)). Positions 214–233 (NSPVAPPSASSQLNSSNPSS) are enriched in low complexity. The interval 214–265 (NSPVAPPSASSQLNSSNPSSPFRPLSASTDKQSNTSLNRVLGKNRMPETQTT) is disordered. Positions 239-251 (SASTDKQSNTSLN) are enriched in polar residues. The t-SNARE coiled-coil homology domain occupies 278–340 (NQTMEDQDMQ…HRTRAGLRKL (63 aa)).

In terms of assembly, possibly multimeric.

The protein resides in the vacuole. Functionally, essential for proper morphogenesis of the vacuole. May exist as structural reinforcement on the surface of the vacuolar membrane and be required for maintenance against rupture by osmotic pressure. The chain is Vacuolar morphogenesis protein 7 homolog from Schizosaccharomyces pombe (strain 972 / ATCC 24843) (Fission yeast).